The chain runs to 208 residues: Guanylate kinase (208 aa).

Residues 4–182 (GQLYIISAPS…ALEELKSVFR (179 aa)) enclose the Guanylate kinase-like domain. 11–18 (APSGAGKT) contacts ATP.

This sequence belongs to the guanylate kinase family.

It localises to the cytoplasm. It carries out the reaction GMP + ATP = GDP + ADP. In terms of biological role, essential for recycling GMP and indirectly, cGMP. This Hahella chejuensis (strain KCTC 2396) protein is Guanylate kinase.